Reading from the N-terminus, the 595-residue chain is Actin-histidine N-methyltransferase (595 aa).

Residues 1 to 22 form a disordered region; that stretch reads MGKKSRVKTQKSGTGATATVSP. The span at 10-20 shows a compositional bias: polar residues; the sequence is QKSGTGATATV. S-adenosyl-L-methionine is bound by residues Arg-75, 104–106, Arg-254, 275–279, and 325–327; these read EGF, DMCNH, and SGF. The SET domain occupies 94-314; the sequence is EGFEMVNFKE…AGEQIYIFYG (221 aa). Ser-513 is modified (phosphoserine). The span at 549-572 shows a compositional bias: polar residues; it reads ENGLVNGENSVPNGTRSENENLNQ. A disordered region spans residues 549–595; it reads ENGLVNGENSVPNGTRSENENLNQEESKRAVEDAKGSSSDNTAEVKE. Basic and acidic residues predominate over residues 573–583; sequence EESKRAVEDAK. Residues 584–595 are compositionally biased toward polar residues; it reads GSSSDNTAEVKE.

It belongs to the class V-like SAM-binding methyltransferase superfamily. SETD3 actin-histidine methyltransferase family. Interacts with MYOD1. Post-translationally, phosphorylated by GSK3B, which is required for recognition by the SCF(FBXW7) complex and subsequent degradation. Ubiquitinated by the SCF(FBXW7) complex following phosphorylation by GSK3B, leading to its degradation by the proteasome.

Its subcellular location is the cytoplasm. The protein localises to the nucleus. The catalysed reaction is L-histidyl-[protein] + S-adenosyl-L-methionine = N(tele)-methyl-L-histidyl-[protein] + S-adenosyl-L-homocysteine + H(+). Its function is as follows. Protein-histidine N-methyltransferase that specifically mediates 3-methylhistidine (tele-methylhistidine) methylation of actin at 'His-73'. Histidine methylation of actin is required for smooth muscle contraction of the laboring uterus during delivery. Does not have protein-lysine N-methyltransferase activity and probably only catalyzes histidine methylation of actin. This chain is Actin-histidine N-methyltransferase, found in Papio anubis (Olive baboon).